A 501-amino-acid chain; its full sequence is L-ornithine N(5)-monooxygenase (501 aa).

Residues 1–16 (MNGTSTTGNGFTNGTN) are compositionally biased toward low complexity. Residues 1–40 (MNGTSTTGNGFTNGTNYPVPKLELQPETTSTSPTRAQTHP) are disordered. A compositionally biased stretch (polar residues) spans 26–37 (PETTSTSPTRAQ). FAD-binding positions include 92-100 (EKQSNFAWH) and Gln111. Position 116 (Lys116) interacts with substrate. Val177 contributes to the FAD binding site. 263-266 (SGQS) contacts NADP(+). Substrate-binding positions include 304–307 (NELF) and Asn334. 334–336 (NYS) is a binding site for NADP(+). FAD is bound at residue 476 to 478 (SLL). Ser479 lines the substrate pocket.

The protein belongs to the lysine N(6)-hydroxylase/L-ornithine N(5)-oxygenase family. Homotetramer. FAD is required as a cofactor.

The enzyme catalyses L-ornithine + NADPH + O2 = N(5)-hydroxy-L-ornithine + NADP(+) + H2O. The catalysed reaction is L-ornithine + NADH + O2 = N(5)-hydroxy-L-ornithine + NAD(+) + H2O. The protein operates within siderophore biosynthesis. Functionally, L-ornithine N(5)-monooxygenase; part of the siderophore biosynthetic pathway. Arthroderma benhamiae produces 2 types of extracellular siderophores, ferrichrome C and ferricrocin. The biosynthesis of these siderophores depends on the hydroxylation of ornithine to N(5)-hydroxyornithine, catalyzed by the monooxygenase sidA. The structure of ferricrocin differs from ferrichrome C only by a serine for alanine substitution and the assembly of both siderophores is suggested to be performed by the nonribosomal peptide synthase (NRPS) sidC. In Arthroderma benhamiae (strain ATCC MYA-4681 / CBS 112371) (Trichophyton mentagrophytes), this protein is L-ornithine N(5)-monooxygenase.